The following is a 443-amino-acid chain: D-serine dehydratase (443 aa).

N6-(pyridoxal phosphate)lysine is present on lysine 118.

The protein belongs to the serine/threonine dehydratase family. DsdA subfamily. In terms of assembly, monomer. The cofactor is pyridoxal 5'-phosphate.

The catalysed reaction is D-serine = pyruvate + NH4(+). The protein is D-serine dehydratase of Photorhabdus laumondii subsp. laumondii (strain DSM 15139 / CIP 105565 / TT01) (Photorhabdus luminescens subsp. laumondii).